The sequence spans 872 residues: Alanine--tRNA ligase (872 aa).

Residues H567, H571, C669, and H673 each coordinate Zn(2+).

This sequence belongs to the class-II aminoacyl-tRNA synthetase family. Zn(2+) is required as a cofactor.

Its subcellular location is the cytoplasm. It carries out the reaction tRNA(Ala) + L-alanine + ATP = L-alanyl-tRNA(Ala) + AMP + diphosphate. In terms of biological role, catalyzes the attachment of alanine to tRNA(Ala) in a two-step reaction: alanine is first activated by ATP to form Ala-AMP and then transferred to the acceptor end of tRNA(Ala). Also edits incorrectly charged Ser-tRNA(Ala) and Gly-tRNA(Ala) via its editing domain. This chain is Alanine--tRNA ligase, found in Streptococcus pyogenes serotype M5 (strain Manfredo).